A 278-amino-acid chain; its full sequence is 4-deoxy-L-threo-5-hexosulose-uronate ketol-isomerase (278 aa).

Zn(2+)-binding residues include histidine 196, histidine 198, glutamate 203, and histidine 245.

This sequence belongs to the KduI family. Zn(2+) serves as cofactor.

It catalyses the reaction 5-dehydro-4-deoxy-D-glucuronate = 3-deoxy-D-glycero-2,5-hexodiulosonate. It functions in the pathway glycan metabolism; pectin degradation; 2-dehydro-3-deoxy-D-gluconate from pectin: step 4/5. Catalyzes the isomerization of 5-dehydro-4-deoxy-D-glucuronate to 3-deoxy-D-glycero-2,5-hexodiulosonate. This chain is 4-deoxy-L-threo-5-hexosulose-uronate ketol-isomerase, found in Yersinia pestis bv. Antiqua (strain Antiqua).